Here is a 59-residue protein sequence, read N- to C-terminus: Temporin-CDYe (59 aa).

A signal peptide spans M1–C22. Residues E23–E42 constitute a propeptide that is removed on maturation.

The protein belongs to the frog skin active peptide (FSAP) family. Temporin subfamily. Expressed by the skin glands.

It is found in the secreted. Antimicrobial peptide. This is Temporin-CDYe from Rana dybowskii (Dybovsky's frog).